The following is a 218-amino-acid chain: MQIVDRSNLEASLKLALSPENNPKRNFVQSVEIIVTFKEVDMKKGDLKLREIVVLPKPPEKTKKVLVVPTIQQLEYAKKAEPNTILTKEELQKLQGNKRAIKKIARQNDWFLIAPDSMALVGRILGPALGPRGKFPTPLPNTADISEYILRFKRSTLVKTKDQPQTQVFIGTESQQIADLAENALAVLNVIESKGYAQKVRNIYVKTTMGKVVKVELR.

Belongs to the universal ribosomal protein uL1 family. Part of the 50S ribosomal subunit.

Functionally, probably involved in E site tRNA release. Binds directly to 23S rRNA. In terms of biological role, protein L1 is also a translational repressor protein, it controls the translation of its operon by binding to its mRNA. This is Large ribosomal subunit protein uL1 from Saccharolobus solfataricus (strain ATCC 35092 / DSM 1617 / JCM 11322 / P2) (Sulfolobus solfataricus).